Reading from the N-terminus, the 129-residue chain is Small ribosomal subunit protein uS11 (129 aa).

The protein belongs to the universal ribosomal protein uS11 family. In terms of assembly, part of the 30S ribosomal subunit. Interacts with proteins S7 and S18. Binds to IF-3.

Located on the platform of the 30S subunit, it bridges several disparate RNA helices of the 16S rRNA. Forms part of the Shine-Dalgarno cleft in the 70S ribosome. This Bacteroides thetaiotaomicron (strain ATCC 29148 / DSM 2079 / JCM 5827 / CCUG 10774 / NCTC 10582 / VPI-5482 / E50) protein is Small ribosomal subunit protein uS11.